A 195-amino-acid chain; its full sequence is Peroxiredoxin (195 aa).

Positions 4-162 (AMIGKPAPEF…TLRLVQAFQF (159 aa)) constitute a Thioredoxin domain. Cys49 functions as the Cysteine sulfenic acid (-SOH) intermediate in the catalytic mechanism.

The protein belongs to the peroxiredoxin family. AhpC/Prx1 subfamily. Homodimer; disulfide-linked, upon oxidation.

The enzyme catalyses a hydroperoxide + [thioredoxin]-dithiol = an alcohol + [thioredoxin]-disulfide + H2O. Functionally, thiol-specific peroxidase that catalyzes the reduction of hydrogen peroxide and organic hydroperoxides to water and alcohols, respectively. Plays a role in cell protection against oxidative stress by detoxifying peroxides and as sensor of hydrogen peroxide-mediated signaling events. The protein is Peroxiredoxin of Ascaris suum (Pig roundworm).